Here is a 115-residue protein sequence, read N- to C-terminus: Nascent polypeptide-associated complex protein (115 aa).

An NAC-A/B domain is found at 6 to 72 (PMNPKQLKKL…SEEEKAIINI (67 aa)).

It belongs to the NAC-alpha family. As to quaternary structure, homodimer. Interacts with the ribosome. Binds ribosomal RNA.

Contacts the emerging nascent chain on the ribosome. This Pyrococcus horikoshii (strain ATCC 700860 / DSM 12428 / JCM 9974 / NBRC 100139 / OT-3) protein is Nascent polypeptide-associated complex protein.